An 800-amino-acid polypeptide reads, in one-letter code: uncharacterized protein (800 aa).

Residues 1-21 (MNRFFISTLLLLAQHLAPAAA) form the signal peptide. Positions 63–72 (SLSTGSPVEI) are enriched in polar residues. 3 disordered regions span residues 63–470 (SLST…PLTT), 602–670 (TPIT…SSTS), and 710–776 (SSLS…TPSS). Composition is skewed to low complexity over residues 73–314 (TSTS…SSTS), 321–368 (STSS…SSTS), 375–444 (STSS…TSTP), and 451–470 (TTST…PLTT). Residues 710-720 (SSLSSIPNNST) are compositionally biased toward low complexity. Residues 721–734 (EVKTASTSSGTEIK) are compositionally biased toward polar residues. Residues 735–776 (TASTSSGSSSSSSYTPASSTSTTTSSVSSRQSSSSSSFTPSS) show a composition bias toward low complexity.

Its subcellular location is the secreted. The protein resides in the cell surface. This is an uncharacterized protein from Schizosaccharomyces pombe (strain 972 / ATCC 24843) (Fission yeast).